The sequence spans 67 residues: Protein AaeX (67 aa).

2 helical membrane passes run 3-23 and 43-63; these read LFPVIVVFGLSFPPIFFELLL and FVWHPALFNTALYCCLFYLIS.

Belongs to the AaeX family.

Its subcellular location is the cell membrane. This Escherichia coli (strain K12 / DH10B) protein is Protein AaeX.